The chain runs to 379 residues: Alcohol dehydrogenase class-3 (379 aa).

Serine 2 is subject to N-acetylserine. Positions 48, 70, 100, 103, 106, 114, and 177 each coordinate Zn(2+).

Belongs to the zinc-containing alcohol dehydrogenase family. Class-III subfamily. Requires Zn(2+) as cofactor.

The enzyme catalyses a primary alcohol + NAD(+) = an aldehyde + NADH + H(+). It catalyses the reaction a secondary alcohol + NAD(+) = a ketone + NADH + H(+). It carries out the reaction S-(hydroxymethyl)glutathione + NADP(+) = S-formylglutathione + NADPH + H(+). The catalysed reaction is S-(hydroxymethyl)glutathione + NAD(+) = S-formylglutathione + NADH + H(+). The enzyme catalyses octan-1-ol + NAD(+) = octanal + NADH + H(+). Class-III ADH is remarkably ineffective in oxidizing ethanol, but it readily catalyzes the oxidation of long-chain primary alcohols and the oxidation of S-(hydroxymethyl) glutathione. This is Alcohol dehydrogenase class-3 (Fdh) from Drosophila melanogaster (Fruit fly).